The primary structure comprises 415 residues: Serine hydroxymethyltransferase (415 aa).

Residues leucine 117 and 121–123 each bind (6S)-5,6,7,8-tetrahydrofolate; that span reads GHL. Residue lysine 225 is modified to N6-(pyridoxal phosphate)lysine. 349-351 contacts (6S)-5,6,7,8-tetrahydrofolate; the sequence is SPF.

The protein belongs to the SHMT family. As to quaternary structure, homodimer. It depends on pyridoxal 5'-phosphate as a cofactor.

It is found in the cytoplasm. It carries out the reaction (6R)-5,10-methylene-5,6,7,8-tetrahydrofolate + glycine + H2O = (6S)-5,6,7,8-tetrahydrofolate + L-serine. The protein operates within one-carbon metabolism; tetrahydrofolate interconversion. Its pathway is amino-acid biosynthesis; glycine biosynthesis; glycine from L-serine: step 1/1. Functionally, catalyzes the reversible interconversion of serine and glycine with tetrahydrofolate (THF) serving as the one-carbon carrier. This reaction serves as the major source of one-carbon groups required for the biosynthesis of purines, thymidylate, methionine, and other important biomolecules. Also exhibits THF-independent aldolase activity toward beta-hydroxyamino acids, producing glycine and aldehydes, via a retro-aldol mechanism. The polypeptide is Serine hydroxymethyltransferase (Nitratiruptor sp. (strain SB155-2)).